Reading from the N-terminus, the 175-residue chain is MTSSAMDNNEPKVLEMVYDATILPEGSSMDPNIMDCINRHINMCIQRTYSSSIIAILNRFLTMNKDELNNTQCHIIKEFMTYEQMAIDHYGEYVNAILYQIRKRPNQHHTIDLFKKIKRTPYDTFKVDPVEFVKKVIGFVSILNKYKPVYSYVLYENVLYDEFKCFINYVETKYF.

It belongs to the poxviridae OPG036 family.

The protein resides in the host nucleus. Functionally, plays a role in the inhibition of host innate immune response. Within the host nucleus, inhibits activation of interferon-beta promoter by inhibiting IRF3 activation. The sequence is that of Protein OPG036 (OPG036) from Homo sapiens (Human).